The chain runs to 873 residues: Mitogen-activated protein kinase kinase kinase kinase 3 (873 aa).

M1 is subject to N-acetylmethionine. Positions 16–273 (FELIQRIGSG…AEKLLQHPFV (258 aa)) constitute a Protein kinase domain. ATP-binding positions include 22–30 (IGSGTYGDV) and K45. D136 acts as the Proton acceptor in catalysis. Phosphoserine occurs at positions 329 and 377. The tract at residues 389 to 518 (AHLEDDEGDD…KPISNGLPPT (130 aa)) is disordered. The segment covering 452 to 466 (HVPPRPPPPRLPPQK) has biased composition (pro residues). Over residues 487-499 (VHQQQSEQRGTNL) the composition is skewed to polar residues. A CNH domain is found at 535-846 (PLKIHCATSW…IFRLLGSDRV (312 aa)).

The protein belongs to the protein kinase superfamily. STE Ser/Thr protein kinase family. STE20 subfamily. In terms of assembly, interacts with SH3GL2. Interaction appears to regulate MAP4K3-mediated JNK activation. It depends on Mg(2+) as a cofactor.

It catalyses the reaction L-seryl-[protein] + ATP = O-phospho-L-seryl-[protein] + ADP + H(+). The enzyme catalyses L-threonyl-[protein] + ATP = O-phospho-L-threonyl-[protein] + ADP + H(+). In terms of biological role, serine/threonine kinase that plays a role in the response to environmental stress. Appears to act upstream of the JUN N-terminal pathway. Activator of the Hippo signaling pathway which plays a pivotal role in organ size control and tumor suppression by restricting proliferation and promoting apoptosis. MAP4Ks act in parallel to and are partially redundant with STK3/MST2 and STK4/MST2 in the phosphorylation and activation of LATS1/2, and establish MAP4Ks as components of the expanded Hippo pathway. The chain is Mitogen-activated protein kinase kinase kinase kinase 3 (Map4k3) from Rattus norvegicus (Rat).